Consider the following 396-residue polypeptide: Acetate kinase (396 aa).

Asn-8 contributes to the Mg(2+) binding site. Lys-15 provides a ligand contact to ATP. Residue Arg-89 participates in substrate binding. Catalysis depends on Asp-146, which acts as the Proton donor/acceptor. ATP is bound by residues 206 to 210 (HLGNG), 280 to 282 (DMR), and 328 to 332 (GVGEN). Glu-382 lines the Mg(2+) pocket.

It belongs to the acetokinase family. As to quaternary structure, homodimer. Requires Mg(2+) as cofactor. The cofactor is Mn(2+).

It localises to the cytoplasm. It carries out the reaction acetate + ATP = acetyl phosphate + ADP. It participates in metabolic intermediate biosynthesis; acetyl-CoA biosynthesis; acetyl-CoA from acetate: step 1/2. Its function is as follows. Catalyzes the formation of acetyl phosphate from acetate and ATP. Can also catalyze the reverse reaction. The chain is Acetate kinase from Clavibacter sepedonicus (Clavibacter michiganensis subsp. sepedonicus).